The chain runs to 271 residues: 4,5-DOPA dioxygenase extradiol (271 aa).

Zn(2+)-binding residues include histidine 22, histidine 57, histidine 177, and histidine 234.

The protein belongs to the DODA-type extradiol aromatic ring-opening dioxygenase family. In terms of assembly, monomer. It depends on Zn(2+) as a cofactor.

The protein resides in the cytoplasm. It carries out the reaction L-dopa + O2 = 4-(L-alanin-3-yl)-2-hydroxy-cis,cis-muconate 6-semialdehyde + H(+). In vitro, opens the cyclic ring of dihydroxy-phenylalanine (DOPA) between carbons 4 and 5, thus producing an unstable seco-DOPA that rearranges nonenzymatically to betalamic acid. The physiological substrate is unknown. This is 4,5-DOPA dioxygenase extradiol (ygiD) from Escherichia coli (strain K12).